A 388-amino-acid chain; its full sequence is Nitric oxide reductase FlRd-NAD(+) reductase (388 aa).

The protein belongs to the FAD-dependent oxidoreductase family. FAD serves as cofactor.

It localises to the cytoplasm. It carries out the reaction 2 reduced [nitric oxide reductase rubredoxin domain] + NAD(+) + H(+) = 2 oxidized [nitric oxide reductase rubredoxin domain] + NADH. The protein operates within nitrogen metabolism; nitric oxide reduction. Functionally, one of at least two accessory proteins for anaerobic nitric oxide (NO) reductase. Reduces the rubredoxin moiety of NO reductase. The chain is Nitric oxide reductase FlRd-NAD(+) reductase from Aeromonas salmonicida (strain A449).